The following is a 573-amino-acid chain: Urease subunit alpha 1 (573 aa).

The 438-residue stretch at 136-573 (GGIDTHVHFI…LPLAQRYFLF (438 aa)) folds into the Urease domain. His141, His143, and Lys224 together coordinate Ni(2+). N6-carboxylysine is present on Lys224. A substrate-binding site is contributed by His226. Residues His253 and His279 each coordinate Ni(2+). His327 serves as the catalytic Proton donor. Ni(2+) is bound at residue Asp367.

The protein belongs to the metallo-dependent hydrolases superfamily. Urease alpha subunit family. As to quaternary structure, may form a heterohexamer of 3 UreC (alpha) and 3 UreAB (gamma/beta) subunits. May also form a heterotrimer of UreA (gamma), UreB (beta) and UreC (alpha) subunits. Three heterotrimers associate to form the active enzyme. Ni cation serves as cofactor. In terms of processing, carboxylation allows a single lysine to coordinate two nickel ions.

The protein localises to the cytoplasm. It carries out the reaction urea + 2 H2O + H(+) = hydrogencarbonate + 2 NH4(+). It functions in the pathway nitrogen metabolism; urea degradation; CO(2) and NH(3) from urea (urease route): step 1/1. This Streptomyces coelicolor (strain ATCC BAA-471 / A3(2) / M145) protein is Urease subunit alpha 1.